We begin with the raw amino-acid sequence, 461 residues long: MSVRIEHDTFGEIEVPADKYWGAQTERSKRNFPVGKERMPIEVVYGFAQLKRGAALANHALGKLSDAKKDAIVYACDRVLNKELDEHFPLVVWQTGSGTQSNMNVNEVVSYVANTYLKEQGIDESIHPNDDVNKSQSSNDTFPTAMHVALYNEVETKLEPALKTLRDTFKQKEEQYHDIIKIGRTHLQDATPIRLGQEISGWRYMLDKCETLLSESKAHILNLAIGGTAVGTGINAHPEFGDKVAKFIAENTGYPFVSSENKFHALTAHDEVVQLHGTLKALATDLMKIANDVRWLASGPRAGLAEISIPENEPGSSIMPGKVNPTQCEMLTMVAVQVMGNDTAVGIASSQGNFELNVYKPVILLNTLQSIYLLADGMDTFNNNCAVGIEPIPENIDNYLNQSLMLVTALNPHIGYEKAASIAKKAHREGLTLKESAIDSGYVTEEQFEQWIKPEDMVEPK.

Residues 97-99 (SGT), 127-130 (HPND), 137-139 (SSN), and T185 each bind substrate. H186 functions as the Proton donor/acceptor in the catalytic mechanism. S316 is a catalytic residue. Substrate-binding positions include S317 and 322-324 (KVN).

Belongs to the class-II fumarase/aspartase family. Fumarase subfamily. As to quaternary structure, homotetramer.

The protein localises to the cytoplasm. It carries out the reaction (S)-malate = fumarate + H2O. It participates in carbohydrate metabolism; tricarboxylic acid cycle; (S)-malate from fumarate: step 1/1. Involved in the TCA cycle. Catalyzes the stereospecific interconversion of fumarate to L-malate. The polypeptide is Fumarate hydratase class II (Staphylococcus saprophyticus subsp. saprophyticus (strain ATCC 15305 / DSM 20229 / NCIMB 8711 / NCTC 7292 / S-41)).